The sequence spans 160 residues: Putative antiporter subunit mnhE2 (160 aa).

A run of 3 helical transmembrane segments spans residues 22 to 42 (HFKF…IYIL), 55 to 75 (IWVA…SSIS), and 100 to 120 (SDWA…STVI).

This sequence belongs to the CPA3 antiporters (TC 2.A.63) subunit E family. In terms of assembly, may form a heterooligomeric complex that consists of seven subunits: mnhA2, mnhB2, mnhC2, mnhD2, mnhE2, mnhF2 and mnhG2.

It is found in the cell membrane. The sequence is that of Putative antiporter subunit mnhE2 (mnhE2) from Staphylococcus aureus (strain Mu3 / ATCC 700698).